Reading from the N-terminus, the 253-residue chain is Discoidin-1 subunit B/C (253 aa).

S2 is subject to N-acetylserine. The 151-residue stretch at S2–Q152 folds into the F5/8 type C domain. The short motif at R79 to D81 is the Cell attachment site element.

Tetramer of four different chains (A to D). Stalk cells.

Its subcellular location is the cytoplasm. Functionally, galactose- and N-acetylgalactosamine-binding lectin. May play a role in cell-substratum adhesion rather than in cell-cell adhesion. May be necessary for the maintenance of normal elongate morphology during aggregation. The sequence is that of Discoidin-1 subunit B/C (dscC-1) from Dictyostelium discoideum (Social amoeba).